The sequence spans 123 residues: UPF0738 protein BcerKBAB4_1107 (123 aa).

It belongs to the UPF0738 family.

The protein is UPF0738 protein BcerKBAB4_1107 of Bacillus mycoides (strain KBAB4) (Bacillus weihenstephanensis).